Consider the following 271-residue polypeptide: Phosphatidylglycerol--prolipoprotein diacylglyceryl transferase (271 aa).

Transmembrane regions (helical) follow at residues 25–45 (WYGIMYDVALLLALLLAKFFV), 60–80 (YFIWVEIGVILGARLGYILIY), 103–123 (FVGIRGMSYHGAIIGFLIATL), 134–154 (WIFLDLVALSVPLAYVFGRIG), 181–201 (PSQFYEAFLEGIVVFIIVYLA), 209–229 (GELILVYAGAYSLARFICEFY), and 235–255 (GIGFVLWGMSMGQILSFIMFI). A 1,2-diacyl-sn-glycero-3-phospho-(1'-sn-glycerol) is bound at residue arginine 152.

The protein belongs to the Lgt family.

The protein resides in the cell inner membrane. It carries out the reaction L-cysteinyl-[prolipoprotein] + a 1,2-diacyl-sn-glycero-3-phospho-(1'-sn-glycerol) = an S-1,2-diacyl-sn-glyceryl-L-cysteinyl-[prolipoprotein] + sn-glycerol 1-phosphate + H(+). It functions in the pathway protein modification; lipoprotein biosynthesis (diacylglyceryl transfer). Functionally, catalyzes the transfer of the diacylglyceryl group from phosphatidylglycerol to the sulfhydryl group of the N-terminal cysteine of a prolipoprotein, the first step in the formation of mature lipoproteins. This Campylobacter jejuni subsp. doylei (strain ATCC BAA-1458 / RM4099 / 269.97) protein is Phosphatidylglycerol--prolipoprotein diacylglyceryl transferase.